We begin with the raw amino-acid sequence, 253 residues long: Major prion protein (253 aa).

The N-terminal stretch at 1-22 (MANLGCWMLVLFVATWSDLGLC) is a signal peptide. The interval 23–230 (KKRPKPGGWN…ESQAYYQRGS (208 aa)) is interaction with GRB2, ERI3 and SYN1. A disordered region spans residues 26–108 (PKPGGWNTGG…WNKPSKPKTN (83 aa)). Repeat copies occupy residues 51–59 (PQGGGGWGQ), 60–67 (PHGGGWGQ), 68–75 (PHGGGWGQ), 76–83 (PHGGGWGQ), and 84–91 (PHGGGWGQ). The tract at residues 51 to 91 (PQGGGGWGQPHGGGWGQPHGGGWGQPHGGGWGQPHGGGWGQ) is 5 X 8 AA tandem repeats of P-H-G-G-G-W-G-Q. Positions 52-95 (QGGGGWGQPHGGGWGQPHGGGWGQPHGGGWGQPHGGGWGQGGGT) are enriched in gly residues. Positions 61, 62, 63, 69, 70, 71, 77, 78, 79, 85, 86, and 87 each coordinate Cu(2+). The cysteines at positions 179 and 214 are disulfide-linked. N-linked (GlcNAc...) asparagine glycosylation is found at N181 and N197. A lipid anchor (GPI-anchor amidated serine) is attached at S230. Positions 231–253 (SMVLFSSPPVILLISFLIFLIVG) are cleaved as a propeptide — removed in mature form.

Belongs to the prion family. In terms of assembly, monomer and homodimer. Has a tendency to aggregate into amyloid fibrils containing a cross-beta spine, formed by a steric zipper of superposed beta-strands. Soluble oligomers may represent an intermediate stage on the path to fibril formation. Copper binding may promote oligomerization. Interacts with GRB2, APP, ERI3/PRNPIP and SYN1. Mislocalized cytosolically exposed PrP interacts with MGRN1; this interaction alters MGRN1 subcellular location and causes lysosomal enlargement. Interacts with KIAA1191.

The protein resides in the cell membrane. Its subcellular location is the golgi apparatus. Functionally, its primary physiological function is unclear. Has cytoprotective activity against internal or environmental stresses. May play a role in neuronal development and synaptic plasticity. May be required for neuronal myelin sheath maintenance. May play a role in iron uptake and iron homeostasis. Soluble oligomers are toxic to cultured neuroblastoma cells and induce apoptosis (in vitro). Association with GPC1 (via its heparan sulfate chains) targets PRNP to lipid rafts. Also provides Cu(2+) or Zn(2+) for the ascorbate-mediated GPC1 deaminase degradation of its heparan sulfate side chains. The protein is Major prion protein (PRNP) of Hylobates lar (Lar gibbon).